The following is a 355-amino-acid chain: DNA polymerase IV (355 aa).

The UmuC domain occupies 4-185 (IIHIDMDCYF…LSLGKIPGVG (182 aa)). Residues Asp-8 and Asp-103 each contribute to the Mg(2+) site. Residue Glu-104 is part of the active site.

The protein belongs to the DNA polymerase type-Y family. As to quaternary structure, monomer. Mg(2+) is required as a cofactor.

The protein localises to the cytoplasm. The enzyme catalyses DNA(n) + a 2'-deoxyribonucleoside 5'-triphosphate = DNA(n+1) + diphosphate. Poorly processive, error-prone DNA polymerase involved in untargeted mutagenesis. Copies undamaged DNA at stalled replication forks, which arise in vivo from mismatched or misaligned primer ends. These misaligned primers can be extended by PolIV. Exhibits no 3'-5' exonuclease (proofreading) activity. May be involved in translesional synthesis, in conjunction with the beta clamp from PolIII. The protein is DNA polymerase IV of Shewanella amazonensis (strain ATCC BAA-1098 / SB2B).